A 333-amino-acid chain; its full sequence is Protoheme IX farnesyltransferase (333 aa).

The next 7 membrane-spanning stretches (helical) occupy residues 64-84 (LICT…LNCL), 110-130 (TVFL…VSGV), 133-153 (LAAG…TVIL), 161-181 (IVFG…AATG), 189-209 (WLFG…AILL), 246-266 (IMGV…LLPF), and 287-307 (AKSL…LLLI).

Belongs to the UbiA prenyltransferase family. Protoheme IX farnesyltransferase subfamily.

The protein localises to the cell inner membrane. It carries out the reaction heme b + (2E,6E)-farnesyl diphosphate + H2O = Fe(II)-heme o + diphosphate. It participates in porphyrin-containing compound metabolism; heme O biosynthesis; heme O from protoheme: step 1/1. Its function is as follows. Converts heme B (protoheme IX) to heme O by substitution of the vinyl group on carbon 2 of heme B porphyrin ring with a hydroxyethyl farnesyl side group. The protein is Protoheme IX farnesyltransferase of Prochlorococcus marinus (strain AS9601).